A 114-amino-acid chain; its full sequence is MNVRANRVSEQMKKELGDILNRKIKDPRLGFVTVTGVDVTGDLQEAKVFISILGTDKEKENTLLALAKAHGFIRSEIGRRIRLRKVPEMSFEIDNSIAYGNRIDELLRDLNNDQ.

The protein belongs to the RbfA family. As to quaternary structure, monomer. Binds 30S ribosomal subunits, but not 50S ribosomal subunits or 70S ribosomes.

The protein localises to the cytoplasm. Functionally, one of several proteins that assist in the late maturation steps of the functional core of the 30S ribosomal subunit. Associates with free 30S ribosomal subunits (but not with 30S subunits that are part of 70S ribosomes or polysomes). Required for efficient processing of 16S rRNA. May interact with the 5'-terminal helix region of 16S rRNA. The chain is Ribosome-binding factor A from Listeria monocytogenes serotype 4b (strain F2365).